Here is a 114-residue protein sequence, read N- to C-terminus: Macrophage migration inhibitory factor homolog (114 aa).

Proline 2 functions as the Proton acceptor; via imino nitrogen in the catalytic mechanism. Substrate is bound by residues lysine 33 and isoleucine 65.

The protein belongs to the MIF family.

It is found in the secreted. The catalysed reaction is L-dopachrome = 5,6-dihydroxyindole-2-carboxylate. The enzyme catalyses 3-phenylpyruvate = enol-phenylpyruvate. Its function is as follows. Tautomerization of the methyl ester of L-dopachrome. Inhibits migration of human peripheral blood mononuclear cells. In Trichinella spiralis (Trichina worm), this protein is Macrophage migration inhibitory factor homolog.